The sequence spans 331 residues: Ribose-phosphate pyrophosphokinase (331 aa).

55–57 (DGE) contacts ATP. Positions 148 and 187 each coordinate Mg(2+). Lys-211 is an active-site residue. Residues Arg-213, Asp-237, and 241–245 (DTGGT) each bind D-ribose 5-phosphate.

The protein belongs to the ribose-phosphate pyrophosphokinase family. Class I subfamily. In terms of assembly, homohexamer. It depends on Mg(2+) as a cofactor.

It is found in the cytoplasm. It catalyses the reaction D-ribose 5-phosphate + ATP = 5-phospho-alpha-D-ribose 1-diphosphate + AMP + H(+). It participates in metabolic intermediate biosynthesis; 5-phospho-alpha-D-ribose 1-diphosphate biosynthesis; 5-phospho-alpha-D-ribose 1-diphosphate from D-ribose 5-phosphate (route I): step 1/1. Functionally, involved in the biosynthesis of the central metabolite phospho-alpha-D-ribosyl-1-pyrophosphate (PRPP) via the transfer of pyrophosphoryl group from ATP to 1-hydroxyl of ribose-5-phosphate (Rib-5-P). The chain is Ribose-phosphate pyrophosphokinase from Prochlorococcus marinus subsp. pastoris (strain CCMP1986 / NIES-2087 / MED4).